A 396-amino-acid chain; its full sequence is S-adenosylmethionine synthase (396 aa).

His16 provides a ligand contact to ATP. Asp18 is a Mg(2+) binding site. Residue Glu44 coordinates K(+). Residues Glu57 and Gln100 each coordinate L-methionine. The tract at residues 100–110 (QSVDIAQGVDR) is flexible loop. ATP contacts are provided by residues 165-167 (DAK), Asp240, 246-247 (RK), Ala263, and Lys267. Asp240 contacts L-methionine. Lys271 contributes to the L-methionine binding site.

It belongs to the AdoMet synthase family. Homotetramer; dimer of dimers. It depends on Mg(2+) as a cofactor. K(+) serves as cofactor.

It localises to the cytoplasm. It catalyses the reaction L-methionine + ATP + H2O = S-adenosyl-L-methionine + phosphate + diphosphate. It participates in amino-acid biosynthesis; S-adenosyl-L-methionine biosynthesis; S-adenosyl-L-methionine from L-methionine: step 1/1. Catalyzes the formation of S-adenosylmethionine (AdoMet) from methionine and ATP. The overall synthetic reaction is composed of two sequential steps, AdoMet formation and the subsequent tripolyphosphate hydrolysis which occurs prior to release of AdoMet from the enzyme. This is S-adenosylmethionine synthase from Stutzerimonas stutzeri (strain A1501) (Pseudomonas stutzeri).